We begin with the raw amino-acid sequence, 421 residues long: Gamma-glutamyl phosphate reductase (421 aa).

Belongs to the gamma-glutamyl phosphate reductase family.

Its subcellular location is the cytoplasm. It carries out the reaction L-glutamate 5-semialdehyde + phosphate + NADP(+) = L-glutamyl 5-phosphate + NADPH + H(+). The protein operates within amino-acid biosynthesis; L-proline biosynthesis; L-glutamate 5-semialdehyde from L-glutamate: step 2/2. Its function is as follows. Catalyzes the NADPH-dependent reduction of L-glutamate 5-phosphate into L-glutamate 5-semialdehyde and phosphate. The product spontaneously undergoes cyclization to form 1-pyrroline-5-carboxylate. This Shewanella pealeana (strain ATCC 700345 / ANG-SQ1) protein is Gamma-glutamyl phosphate reductase.